The chain runs to 191 residues: Transcription factor HES-2 (191 aa).

The disordered stretch occupies residues 1 to 26 (MAPNVALADSMHNYQPKPGKRNQEAS). Positions 28–85 (LRKTLKPLMEKRRRARINESLNQLKTLILPLIGKDNSRYSKLEKADILEMTVRFLRDI) constitute a bHLH domain. Residues 97 to 130 (YKEGYRACVERLSAILGKSHVLTGEASNRLLEYL) enclose the Orange domain. Polar residues-rich tracts occupy residues 159–173 (RTSQ…QPSS) and 182–191 (QLNSSIWRPW). The tract at residues 159 to 191 (RTSQFGSPLQNQPSSHRPAPCPPQLNSSIWRPW) is disordered. Residues 188–191 (WRPW) carry the WRPW motif motif.

As to quaternary structure, transcription repression requires formation of a complex with a corepressor protein of the Groucho/TLE family. Homodimer, and heterodimer with the other bHLH proteins neurod1, neurod4/ath3, hes1/hairy1 and hes6r. Weakly interacts with the bHLH protein hey1/hrt1. As to expression, expressed in the animal half of the early cleavage stage embryo. During neurulation and organogenesis, the otic vesicles and retina are the main sites of expression; expression in otic placodes begins as early as stage 13.5, persisting in the otic vesicles at stage 30 and beyond. Also transiently expressed in the olfactory placodes. In addition, weakly expressed in primary neurons. Expression in the retina begins at stage 21, and is seen throughout the neural retina by stage 30. From stage 35 onwards, expression progressively declines in the central retina, while remaining high in the margins. At stage 41, expression becomes restricted to the ciliary marginal zone (CMZ) of the retina, the only region where retinogenesis is still occurring.

The protein localises to the nucleus. Transcriptional repressor. Essential in the retina to govern glial versus neuronal differentiation. Promotes gliogenesis through the inhibition of neuronal differentiation by at least two distinct mechanisms; represses proneural gene transcription, and also physically interacts with proneural proteins, including neurod1. In Xenopus laevis (African clawed frog), this protein is Transcription factor HES-2 (hes2).